The chain runs to 318 residues: L-malyl-CoA/beta-methylmalyl-CoA lyase (318 aa).

Residues phenylalanine 19, arginine 24, lysine 30, and arginine 76 each contribute to the substrate site. Glutamate 141 and aspartate 168 together coordinate Mg(2+). Substrate-binding positions include 167-168 (AD) and 251-252 (IH).

It belongs to the HpcH/HpaI aldolase family. As to quaternary structure, homohexamer. Dimer of trimers. It depends on Mg(2+) as a cofactor. Mn(2+) is required as a cofactor.

It carries out the reaction (S)-malyl-CoA = glyoxylate + acetyl-CoA. The catalysed reaction is (2R,3S)-beta-methylmalyl-CoA = propanoyl-CoA + glyoxylate. Its activity is regulated as follows. In vitro inhibited by EDTA. Functionally, involved in the ethylmalonyl-CoA pathway for acetate assimilation. Catalyzes the reversible condensation of glyoxylate and acetyl-CoA to L-malyl-CoA and the reversible condensation of glyoxylate and propionyl-CoA to beta-methylmalyl-CoA. The sequence is that of L-malyl-CoA/beta-methylmalyl-CoA lyase from Rhodobacter capsulatus (Rhodopseudomonas capsulata).